We begin with the raw amino-acid sequence, 595 residues long: Metacaspase-1 (595 aa).

Residues His-411 and Cys-466 contribute to the active site.

The protein belongs to the peptidase C14B family. As to quaternary structure, monomer.

Activated by Ca(2+). Functionally, cysteine protease that cleaves specifically after arginine or lysine residues. The chain is Metacaspase-1 from Plasmodium berghei (strain Anka).